A 478-amino-acid chain; its full sequence is Shikimate biosynthesis protein AroDE (478 aa).

The tract at residues 1–208 (MLCTTISGPS…LKHHYFYNFA (208 aa)) is 3-dehydroquinate dehydratase. 3-dehydroquinate-binding positions include Ser21, 29 to 31 (EMR), and 55 to 57 (AWK). His110 serves as the catalytic Proton donor/acceptor; for 3-dehydroquinate dehydratase activity. Lys133 functions as the Schiff-base intermediate with substrate; for 3-dehydroquinate dehydratase activity in the catalytic mechanism. Arg171 and Gln196 together coordinate 3-dehydroquinate. The interval 209-478 (SLSAQSPICA…VLASLFSIAP (270 aa)) is shikimate 5-dehydrogenase. 226–228 (SIG) contacts shikimate. Lys277 (proton acceptor; for shikimate dehydrogenase activity) is an active-site residue. Positions 298 and 313 each coordinate shikimate. Residues 337–341 (GAGGA), 360–362 (NRT), and Gly435 each bind NADP(+). Shikimate is bound at residue Gln442.

This sequence in the N-terminal section; belongs to the type-I 3-dehydroquinase family. In the C-terminal section; belongs to the shikimate dehydrogenase family.

The enzyme catalyses 3-dehydroquinate = 3-dehydroshikimate + H2O. The catalysed reaction is shikimate + NADP(+) = 3-dehydroshikimate + NADPH + H(+). Its pathway is metabolic intermediate biosynthesis; chorismate biosynthesis; chorismate from D-erythrose 4-phosphate and phosphoenolpyruvate: step 3/7. It functions in the pathway metabolic intermediate biosynthesis; chorismate biosynthesis; chorismate from D-erythrose 4-phosphate and phosphoenolpyruvate: step 4/7. Its function is as follows. Bifunctional enzyme that catalyzes two sequential steps of the aromatic amino acids biosynthetic pathway. In the first reaction, the AroD domain catalyzes the cis-dehydration of 3-dehydroquinate (DHQ) and introduces the first double bond of the aromatic ring to yield 3-dehydroshikimate; in the second reaction, the AroE domain catalyzes the reversible NADPH linked reduction of 3-dehydroshikimate (DHSA) to yield shikimate (SA). This Chlamydia trachomatis serovar D (strain ATCC VR-885 / DSM 19411 / UW-3/Cx) protein is Shikimate biosynthesis protein AroDE.